The chain runs to 61 residues: Insect toxin AaHIT5 (61 aa).

The region spanning 1-61 (DGYIKRHDGC…AWKSETNTCD (61 aa)) is the LCN-type CS-alpha/beta domain. 4 cysteine pairs are disulfide-bonded: Cys-10-Cys-60, Cys-14-Cys-35, Cys-21-Cys-42, and Cys-25-Cys-44.

Expressed by the venom gland.

The protein localises to the secreted. Excitatory insect toxins induce a spastic paralysis. They bind voltage-independently to sodium channels (Nav) and shift the voltage of activation toward more negative potentials thereby affecting sodium channel activation and promoting spontaneous and repetitive firing. This toxin elicits excitatory activity with no flaccid paralysis despite its high degree of sequence similarity with other depressant insect toxins. This toxin is active only on insects. This Androctonus australis (Sahara scorpion) protein is Insect toxin AaHIT5.